A 277-amino-acid polypeptide reads, in one-letter code: Phosphate import ATP-binding protein PstB (277 aa).

The ABC transporter domain maps to 31–272 (LEVPGLNLFY…PAKKQTEDYI (242 aa)). An ATP-binding site is contributed by 63–70 (GPSGCGKS).

Belongs to the ABC transporter superfamily. Phosphate importer (TC 3.A.1.7) family. In terms of assembly, the complex is composed of two ATP-binding proteins (PstB), two transmembrane proteins (PstC and PstA) (Potential). PstS is missing in this species.

It localises to the cell inner membrane. It catalyses the reaction phosphate(out) + ATP + H2O = ADP + 2 phosphate(in) + H(+). In terms of biological role, part of the ABC transporter complex PstSACB involved in phosphate import. Responsible for energy coupling to the transport system. This is Phosphate import ATP-binding protein PstB from Pseudomonas aeruginosa (strain ATCC 15692 / DSM 22644 / CIP 104116 / JCM 14847 / LMG 12228 / 1C / PRS 101 / PAO1).